Here is an 882-residue protein sequence, read N- to C-terminus: Translation initiation factor IF-2 (882 aa).

Residues 57–211 (YIPANKTKDK…KDKSKPKVAT (155 aa)) form a disordered region. The span at 104–115 (TTSEKQKDKGEQ) shows a compositional bias: basic and acidic residues. A compositionally biased stretch (basic residues) spans 199-211 (RHKKDKSKPKVAT). Residues 381 to 550 (ERPPVVTIMG…LIQAEVLELK (170 aa)) form the tr-type G domain. Residues 390 to 397 (GHVDHGKT) form a G1 region. 390 to 397 (GHVDHGKT) is a binding site for GTP. Positions 415 to 419 (GITQH) are G2. The tract at residues 436–439 (DTPG) is G3. Residues 436–440 (DTPGH) and 490–493 (NKMD) contribute to the GTP site. The interval 490 to 493 (NKMD) is G4. The interval 526-528 (SAK) is G5.

Belongs to the TRAFAC class translation factor GTPase superfamily. Classic translation factor GTPase family. IF-2 subfamily.

The protein localises to the cytoplasm. One of the essential components for the initiation of protein synthesis. Protects formylmethionyl-tRNA from spontaneous hydrolysis and promotes its binding to the 30S ribosomal subunits. Also involved in the hydrolysis of GTP during the formation of the 70S ribosomal complex. The chain is Translation initiation factor IF-2 from Helicobacter hepaticus (strain ATCC 51449 / 3B1).